The following is a 546-amino-acid chain: T-complex protein 1 subunit epsilon (546 aa).

This sequence belongs to the TCP-1 chaperonin family. In terms of assembly, heterooligomeric complex of about 850 to 900 kDa that forms two stacked rings, 12 to 16 nm in diameter.

It is found in the cytoplasm. Molecular chaperone; assists the folding of proteins upon ATP hydrolysis. Known to play a role, in vitro, in the folding of actin and tubulin. This chain is T-complex protein 1 subunit epsilon (cct5), found in Schizosaccharomyces pombe (strain 972 / ATCC 24843) (Fission yeast).